A 371-amino-acid polypeptide reads, in one-letter code: Glutamate 5-kinase (371 aa).

Lys-11 contributes to the ATP binding site. 3 residues coordinate substrate: Ser-52, Asp-139, and Asn-151. ATP contacts are provided by residues 171-172 (TD) and 213-219 (TGGMATK). In terms of domain architecture, PUA spans 278 to 356 (EGSLTLDEGA…AEIPYILGYE (79 aa)).

This sequence belongs to the glutamate 5-kinase family.

It localises to the cytoplasm. It catalyses the reaction L-glutamate + ATP = L-glutamyl 5-phosphate + ADP. It participates in amino-acid biosynthesis; L-proline biosynthesis; L-glutamate 5-semialdehyde from L-glutamate: step 1/2. Functionally, catalyzes the transfer of a phosphate group to glutamate to form L-glutamate 5-phosphate. This Synechococcus sp. (strain JA-3-3Ab) (Cyanobacteria bacterium Yellowstone A-Prime) protein is Glutamate 5-kinase.